Consider the following 507-residue polypeptide: Glutamyl-tRNA(Gln) amidotransferase subunit A, mitochondrial (507 aa).

Positions Thr-29–Gln-51 are disordered. Positions Pro-31 to Ser-46 are enriched in pro residues. Catalysis depends on charge relay system residues Lys-57 and Ser-135. Residue Ser-159 is the Acyl-ester intermediate of the active site.

Belongs to the amidase family. GatA subfamily. As to quaternary structure, subunit of the heterotrimeric GatCAB amidotransferase (AdT) complex, composed of A, B and C subunits.

The protein resides in the mitochondrion. It carries out the reaction L-glutamyl-tRNA(Gln) + L-glutamine + ATP + H2O = L-glutaminyl-tRNA(Gln) + L-glutamate + ADP + phosphate + H(+). In terms of biological role, allows the formation of correctly charged Gln-tRNA(Gln) through the transamidation of misacylated Glu-tRNA(Gln) in the mitochondria. The reaction takes place in the presence of glutamine and ATP through an activated gamma-phospho-Glu-tRNA(Gln). The polypeptide is Glutamyl-tRNA(Gln) amidotransferase subunit A, mitochondrial (Podospora anserina (strain S / ATCC MYA-4624 / DSM 980 / FGSC 10383) (Pleurage anserina)).